We begin with the raw amino-acid sequence, 185 residues long: Intraflagellar transport protein 22 homolog (185 aa).

Residues 10–17, 63–67, and 123–126 contribute to the GTP site; these read GPCESGKT, DCGGD, and HKPG. A Phosphoserine modification is found at Ser-137.

The protein belongs to the small GTPase superfamily. Rab family. Component of the IFT complex B, at least composed of IFT20, IFT22, IFT25, IFT27, IFT46, IFT52, TRAF3IP1/IFT54, IFT57, IFT74, IFT80, IFT81, and IFT88. Interacts with IFT88. Interacts with CFAP61.

It is found in the cell projection. The protein resides in the cilium. In terms of biological role, small GTPase-like component of the intraflagellar transport (IFT) complex B. The chain is Intraflagellar transport protein 22 homolog (IFT22) from Macaca fascicularis (Crab-eating macaque).